Here is a 319-residue protein sequence, read N- to C-terminus: Red chlorophyll catabolite reductase, chloroplastic (319 aa).

Residues 1 to 39 (MAMIFCNTLYSSSSPSYLSPLTSKPSRFSKNLRPRAQFQ) constitute a chloroplast transit peptide. Red chlorophyll catabolite contacts are provided by residues glutamate 154 and 207–209 (YVS). The stretch at 255-286 (LERCVKEEEEKIVVGEEERMELERRDKSFRRK) forms a coiled coil. Aspartate 291 serves as a coordination point for red chlorophyll catabolite.

As to quaternary structure, homodimer. Interacts with HCAR. Interacts with SGR1, NYC1, NOL, PPH, PAO and the LHCII complex. Part of a SGR1-CCE-LHCII complex, which acts in chlorophyll breakdown. Expressed in all tissues tested, including roots.

It is found in the plastid. The protein localises to the chloroplast stroma. Its subcellular location is the chloroplast thylakoid membrane. The enzyme catalyses primary fluorescent chlorophyll catabolite + 2 oxidized [2Fe-2S]-[ferredoxin] = red chlorophyll catabolite + 2 reduced [2Fe-2S]-[ferredoxin] + 3 H(+). The protein operates within porphyrin-containing compound metabolism; chlorophyll degradation. Its function is as follows. Catalyzes the key reaction of chlorophyll catabolism, porphyrin macrocycle cleavage of pheophorbide a (pheide a) to a primary fluorescent catabolite (pFCC). Works in a two-step reaction with pheophorbide a oxygenase (PaO) by reducing the C20/C1 double bond of the intermediate, RCC. Belongs to the chlorophyll catabolic enzymes (CCEs). The sequence is that of Red chlorophyll catabolite reductase, chloroplastic from Arabidopsis thaliana (Mouse-ear cress).